A 160-amino-acid polypeptide reads, in one-letter code: Glutathione peroxidase homolog BsaA (160 aa).

Residue Cys-35 is part of the active site.

It belongs to the glutathione peroxidase family.

This Bacillus subtilis (strain 168) protein is Glutathione peroxidase homolog BsaA (bsaA).